The following is a 1348-amino-acid chain: Phosphoribosylformylglycinamidine synthase (1348 aa).

Residues 300–311 (GAATGAGGEIRD) and Ala701 contribute to the ATP site. 4 residues coordinate Mg(2+): Asp702, Glu741, Asn745, and Asp941. Position 943 (Ser943) interacts with ATP. Residues 1099 to 1348 (VAILREQGVN…MFRNARVWCG (250 aa)) enclose the Glutamine amidotransferase type-1 domain. The Nucleophile role is filled by Cys1192. Catalysis depends on residues His1313 and Glu1315.

It in the N-terminal section; belongs to the FGAMS family. In terms of assembly, monomer.

Its subcellular location is the cytoplasm. The catalysed reaction is N(2)-formyl-N(1)-(5-phospho-beta-D-ribosyl)glycinamide + L-glutamine + ATP + H2O = 2-formamido-N(1)-(5-O-phospho-beta-D-ribosyl)acetamidine + L-glutamate + ADP + phosphate + H(+). The protein operates within purine metabolism; IMP biosynthesis via de novo pathway; 5-amino-1-(5-phospho-D-ribosyl)imidazole from N(2)-formyl-N(1)-(5-phospho-D-ribosyl)glycinamide: step 1/2. Phosphoribosylformylglycinamidine synthase involved in the purines biosynthetic pathway. Catalyzes the ATP-dependent conversion of formylglycinamide ribonucleotide (FGAR) and glutamine to yield formylglycinamidine ribonucleotide (FGAM) and glutamate. The chain is Phosphoribosylformylglycinamidine synthase from Xanthomonas campestris pv. campestris (strain ATCC 33913 / DSM 3586 / NCPPB 528 / LMG 568 / P 25).